Consider the following 293-residue polypeptide: Polyamine aminopropyltransferase (293 aa).

The region spanning 10–244 is the PABS domain; it reads HIWFTEYHNN…GFWSFTLASK (235 aa). An S-methyl-5'-thioadenosine-binding site is contributed by Gln39. His70 and Asp94 together coordinate spermidine. Residues Glu114 and 145–146 contribute to the S-methyl-5'-thioadenosine site; that span reads DG. Residue Asp163 is the Proton acceptor of the active site. Position 163–166 (163–166) interacts with spermidine; the sequence is DCPD. Pro170 provides a ligand contact to S-methyl-5'-thioadenosine.

This sequence belongs to the spermidine/spermine synthase family. As to quaternary structure, homodimer or homotetramer.

The protein localises to the cytoplasm. The enzyme catalyses S-adenosyl 3-(methylsulfanyl)propylamine + putrescine = S-methyl-5'-thioadenosine + spermidine + H(+). The protein operates within amine and polyamine biosynthesis; spermidine biosynthesis; spermidine from putrescine: step 1/1. Its function is as follows. Catalyzes the irreversible transfer of a propylamine group from the amino donor S-adenosylmethioninamine (decarboxy-AdoMet) to putrescine (1,4-diaminobutane) to yield spermidine. This is Polyamine aminopropyltransferase from Methanocaldococcus jannaschii (strain ATCC 43067 / DSM 2661 / JAL-1 / JCM 10045 / NBRC 100440) (Methanococcus jannaschii).